Here is a 389-residue protein sequence, read N- to C-terminus: Galactokinase (389 aa).

Glu34–Asp37 is a binding site for substrate. ATP is bound by residues Ser68 and Gly125–Ser131. 2 residues coordinate Mg(2+): Ser131 and Glu163. Residue Asp175 is the Proton acceptor of the active site. Residue Tyr225 coordinates substrate.

The protein belongs to the GHMP kinase family. GalK subfamily.

It localises to the cytoplasm. It carries out the reaction alpha-D-galactose + ATP = alpha-D-galactose 1-phosphate + ADP + H(+). The protein operates within carbohydrate metabolism; galactose metabolism. Functionally, catalyzes the transfer of the gamma-phosphate of ATP to D-galactose to form alpha-D-galactose-1-phosphate (Gal-1-P). The protein is Galactokinase of Clostridium beijerinckii (strain ATCC 51743 / NCIMB 8052) (Clostridium acetobutylicum).